The primary structure comprises 303 residues: MVYLVFLCLLPSLISGASILPEPRKDVRASATDAEIQSLAEQFYAADTNKAASGDITLNLQYKASSSQTSTGTDYANQKLFRYVNEAKLFARPTFARLVNLLDNYAQKTGSAESVPTTEVNEQNAFLDEIFKTSIITKLSNFFISKGYYSSAASFKTDLKAMWFGLYTRTSGPLDSSGFEHVFHGEIHKGKVSGLHNWVKLYLLEKSGQVNYLSYSADGVWKGYPDIYAFQLKWSTYLKTIGSFFVGSSPEFDIAMYTLCYVTRPDSLCSVKMGGSIFKIQTYTWANSTYGNGKRFVASSYPI.

Residues 1-16 (MVYLVFLCLLPSLISG) form the signal peptide. The region spanning 32-303 (TDAEIQSLAE…KRFVASSYPI (272 aa)) is the EndoU domain. Catalysis depends on residues H181, H196, and K239. N287 is a glycosylation site (N-linked (GlcNAc...) asparagine).

Belongs to the ENDOU family. In terms of assembly, monomer. Requires Mn(2+) as cofactor.

The protein localises to the secreted. It catalyses the reaction ribonucleotidyl-uridine-RNA = a 5'-end dephospho-uridine-RNA + a 3'-end 2',3'-cyclophospho-ribonucleotide-RNA. Endoribonuclease that cleaves single-stranded RNAs at 5' of uridylates and releases a product with a 2',3'-cyclic phosphate at the 3'-end. The polypeptide is Uridylate-specific endoribonuclease C (endou-c) (Xenopus laevis (African clawed frog)).